Consider the following 158-residue polypeptide: Protein OPG060 (158 aa).

Belongs to the orthopoxvirus OPG058 family.

The sequence is that of Protein OPG060 (OPG060) from Cynomys gunnisoni (Gunnison's prairie dog).